The sequence spans 528 residues: Probable rhamnogalacturonate lyase A (528 aa).

The signal sequence occupies residues 1 to 20 (MLSKATLLLFLPSWARVTYA). Asparagine 46 carries N-linked (GlcNAc...) asparagine glycosylation. Cysteine 50 and cysteine 93 are oxidised to a cystine. An N-linked (GlcNAc...) asparagine glycan is attached at asparagine 148. Residues cysteine 184 and cysteine 193 are joined by a disulfide bond. An N-linked (GlcNAc...) asparagine glycan is attached at asparagine 351.

This sequence belongs to the polysaccharide lyase 4 family.

The protein localises to the secreted. It carries out the reaction Endotype eliminative cleavage of L-alpha-rhamnopyranosyl-(1-&gt;4)-alpha-D-galactopyranosyluronic acid bonds of rhamnogalacturonan I domains in ramified hairy regions of pectin leaving L-rhamnopyranose at the reducing end and 4-deoxy-4,5-unsaturated D-galactopyranosyluronic acid at the non-reducing end.. In terms of biological role, pectinolytic enzymes consist of four classes of enzymes: pectin lyase, polygalacturonase, pectin methylesterase and rhamnogalacturonase. Degrades the rhamnogalacturonan I (RG-I) backbone of pectin. In Aspergillus fumigatus (strain CBS 144.89 / FGSC A1163 / CEA10) (Neosartorya fumigata), this protein is Probable rhamnogalacturonate lyase A (rglA).